Here is an 84-residue protein sequence, read N- to C-terminus: Acyl-CoA-binding protein (84 aa).

The ACB domain maps to 1–84 (MTTFEEAAQK…LYEQLATKYA (84 aa)). An acyl-CoA contacts are provided by residues Lys-12, 27 to 31 (YGLYK), Lys-53, and Tyr-72.

Belongs to the ACBP family. In terms of assembly, interacts with dhkA.

Binds to acyl-CoA. Processed into the SDF-2 (spore differentiation factor 2) a peptide which triggers sporulation. SDF-2 appears to stimulate prestalk cells to release additional SDF-2 by acting through a signal transduction pathway that also involves dhkA, regA and PKA. Induces encapsulation of prespore cells in a dhkA-dependent manner. GABA induces the release of acbA from prespore cells and induces the exposure of tagC on the surface of prestalk cells where it can convert acbA to SDF-2. Glutamate acts as a competitive inhibitor and is also able to inhibit induction of sporulation by SDF-2. This is Acyl-CoA-binding protein (acbA) from Dictyostelium discoideum (Social amoeba).